Here is a 249-residue protein sequence, read N- to C-terminus: 2-C-methyl-D-erythritol 4-phosphate cytidylyltransferase (249 aa).

Belongs to the IspD/TarI cytidylyltransferase family. IspD subfamily.

The catalysed reaction is 2-C-methyl-D-erythritol 4-phosphate + CTP + H(+) = 4-CDP-2-C-methyl-D-erythritol + diphosphate. It functions in the pathway isoprenoid biosynthesis; isopentenyl diphosphate biosynthesis via DXP pathway; isopentenyl diphosphate from 1-deoxy-D-xylulose 5-phosphate: step 2/6. Catalyzes the formation of 4-diphosphocytidyl-2-C-methyl-D-erythritol from CTP and 2-C-methyl-D-erythritol 4-phosphate (MEP). In Shewanella oneidensis (strain ATCC 700550 / JCM 31522 / CIP 106686 / LMG 19005 / NCIMB 14063 / MR-1), this protein is 2-C-methyl-D-erythritol 4-phosphate cytidylyltransferase.